A 267-amino-acid polypeptide reads, in one-letter code: Carboxy-S-adenosyl-L-methionine synthase (267 aa).

A compositionally biased stretch (polar residues) spans 1-11 (MPNRDTQSQND). Residues 1 to 25 (MPNRDTQSQNDTPRHSPEAAEPQRD) are disordered. Over residues 12 to 24 (TPRHSPEAAEPQR) the composition is skewed to basic and acidic residues. S-adenosyl-L-methionine is bound by residues Y59, 84–86 (GCS), 109–110 (DN), 137–138 (DI), N152, and R219.

This sequence belongs to the class I-like SAM-binding methyltransferase superfamily. Cx-SAM synthase family. In terms of assembly, homodimer.

It catalyses the reaction prephenate + S-adenosyl-L-methionine = carboxy-S-adenosyl-L-methionine + 3-phenylpyruvate + H2O. Catalyzes the conversion of S-adenosyl-L-methionine (SAM) to carboxy-S-adenosyl-L-methionine (Cx-SAM). This is Carboxy-S-adenosyl-L-methionine synthase from Yersinia pseudotuberculosis serotype O:1b (strain IP 31758).